Consider the following 95-residue polypeptide: Leukocyte-specific transcript 1 protein (95 aa).

A helical membrane pass occupies residues 22 to 42 (LGLGGLLLLLVIILFICLCGF). A Phosphoserine modification is found at serine 64.

This sequence belongs to the LST1 family. Expressed in spleen and at lower levels in thymus and liver.

Its subcellular location is the membrane. Its function is as follows. Possible role in modulating immune responses. Has an inhibitory effect on lymphocyte proliferation. Induces morphological changes including production of filopodia and microspikes when overexpressed in a variety of cell types and may be involved in dendritic cell maturation. This is Leukocyte-specific transcript 1 protein (Lst1) from Mus musculus (Mouse).